Consider the following 1588-residue polypeptide: MVQLAKVPILGNDIIHVGYNIHDHLVETIIKHCPSSTYVICNDTNLSKVPYYQQLVLEFKASLPEGSRLLTYVVKPGETSKSRETKAQLEDYLLVEGCTRDTVMVAIGGGVIGDMIGFVASTFMRGVRVVQVPTSLLAMVDSSIGGKTAIDTPLGKNFIGAFWQPKFVLVDIKWLETLAKREFINGMAEVIKTACIWNADEFTRLESNASLFLNVVNGAKNVKVTNQLTNEIDEISNTDIEAMLDHTYKLVLESIKVKAEVVSSDERESSLRNLLNFGHSIGHAYEAILTPQALHGECVSIGMVKEAELSRYFGILSPTQVARLSKILVAYGLPVSPDEKWFKELTLHKKTPLDILLKKMSIDKKNEGSKKKVVILESIGKCYGDSAQFVSDEDLRFILTDETLVYPFKDIPADQQKVVIPPGSKSISNRALILAALGEGQCKIKNLLHSDDTKHMLTAVHELKGATISWEDNGETVVVEGHGGSTLSACADPLYLGNAGTASRFLTSLAALVNSTSSQKYIVLTGNARMQQRPIAPLVDSLRANGTKIEYLNNEGSLPIKVYTDSVFKGGRIELAATVSSQYVSSILMCAPYAEEPVTLALVGGKPISKLYVDMTIKMMEKFGINVETSTTEPYTYYIPKGHYINPSEYVIESDASSATYPLAFAAMTGTTVTVPNIGFESLQGDARFARDVLKPMGCKITQTATSTTVSGPPVGTLKPLKHVDMEPMTDAFLTACVVAAISHDSDPNSANTTTIEGIANQRVKECNRILAMATELAKFGVKTTELPDGIQVHGLNSIKDLKVPSDSSGPVGVCTYDDHRVAMSFSLLAGMVNSQNERDEVANPVRILERHCTGKTWPGWWDVLHSELGAKLDGAEPLECTSKKNSKKSVVIIGMRAAGKTTISKWCASALGYKLVDLDELFEQQHNNQSVKQFVVENGWEKFREEETRIFKEVIQNYGDDGYVFSTGGGIVESAESRKALKDFASSGGYVLHLHRDIEETIVFLQSDPSRPAYVEEIREVWNRREGWYKECSNFSFFAPHCSAEAEFQALRRSFSKYIATITGVREIEIPSGRSAFVCLTFDDLTEQTENLTPICYGCEAVEVRVDHLANYSADFVSKQLSILRKATDSIPIIFTVRTMKQGGNFPDEEFKTLRELYDIALKNGVEFLDLELTLPTDIQYEVINKRGNTKIIGSHHDFQGLYSWDDAEWENRFNQALTLDVDVVKFVGTAVNFEDNLRLEHFRDTHKNKPLIAVNMTSKGSISRVLNNVLTPVTSDLLPNSAAPGQLTVAQINKMYTSMGGIEPKELFVVGKPIGHSRSPILHNTGYEILGLPHKFDKFETESAQLVKEKLLDGNKNFGGAAVTIPLKLDIMQYMDELTDAAKVIGAVNTVIPLGNKKFKGDNTDWLGIRNALINNGVPEYVGHTAGLVIGAGGTSRAALYALHSLGCKKIFIINRTTSKLKPLIESLPSEFNIIGIESTKSIEEIKEHVGVAVSCVPADKPLDDELLSKLERFLVKGAHAAFVPTLLEAAYKPSVTPVMTISQDKYQWHVVPGSQMLVHQGVAQFEKWTGFKGPFKAIFDAVTKE.

The 3-dehydroquinate synthase stretch occupies residues 1 to 392 (MVQLAKVPIL…YGDSAQFVSD (392 aa)). Residues 43-45 (DTN), 78-81 (ETSK), 109-111 (GGV), and D114 contribute to the NAD(+) site. Residue R125 coordinates 7-phospho-2-dehydro-3-deoxy-D-arabino-heptonate. 134 to 135 (TS) provides a ligand contact to NAD(+). The 7-phospho-2-dehydro-3-deoxy-D-arabino-heptonate site is built by D141 and K147. NAD(+) is bound at residue K156. N157 serves as a coordination point for 7-phospho-2-dehydro-3-deoxy-D-arabino-heptonate. NAD(+)-binding positions include 174-177 (WLET) and N185. E189 provides a ligand contact to Zn(2+). 7-phospho-2-dehydro-3-deoxy-D-arabino-heptonate is bound by residues 189 to 192 (EVIK) and K258. The active-site Proton acceptor; for 3-dehydroquinate synthase activity is the E268. 7-phospho-2-dehydro-3-deoxy-D-arabino-heptonate contacts are provided by residues 272–276 (RNLLN) and H279. H279 contributes to the Zn(2+) binding site. H283 (proton acceptor; for 3-dehydroquinate synthase activity) is an active-site residue. 7-phospho-2-dehydro-3-deoxy-D-arabino-heptonate contacts are provided by H295 and K364. A Zn(2+)-binding site is contributed by H295. An EPSP synthase region spans residues 405 to 871 (VYPFKDIPAD…WDVLHSELGA (467 aa)). C853 (for EPSP synthase activity) is an active-site residue. The tract at residues 890–1080 (SVVIIGMRAA…IPSGRSAFVC (191 aa)) is shikimate kinase. Position 895 to 902 (895 to 902 (GMRAAGKT)) interacts with ATP. Residues 1081-1293 (LTFDDLTEQT…AAPGQLTVAQ (213 aa)) form a 3-dehydroquinase region. H1198 functions as the Proton acceptor; for 3-dehydroquinate dehydratase activity in the catalytic mechanism. Catalysis depends on K1227, which acts as the Schiff-base intermediate with substrate; for 3-dehydroquinate dehydratase activity. Residues 1306 to 1588 (PKELFVVGKP…KAIFDAVTKE (283 aa)) form a shikimate dehydrogenase region.

The protein in the N-terminal section; belongs to the sugar phosphate cyclases superfamily. Dehydroquinate synthase family. This sequence in the 2nd section; belongs to the EPSP synthase family. In the 3rd section; belongs to the shikimate kinase family. It in the 4th section; belongs to the type-I 3-dehydroquinase family. The protein in the C-terminal section; belongs to the shikimate dehydrogenase family. As to quaternary structure, homodimer. Requires Zn(2+) as cofactor.

The protein resides in the cytoplasm. The enzyme catalyses 7-phospho-2-dehydro-3-deoxy-D-arabino-heptonate = 3-dehydroquinate + phosphate. It carries out the reaction 3-dehydroquinate = 3-dehydroshikimate + H2O. The catalysed reaction is shikimate + NADP(+) = 3-dehydroshikimate + NADPH + H(+). It catalyses the reaction shikimate + ATP = 3-phosphoshikimate + ADP + H(+). The enzyme catalyses 3-phosphoshikimate + phosphoenolpyruvate = 5-O-(1-carboxyvinyl)-3-phosphoshikimate + phosphate. Its pathway is metabolic intermediate biosynthesis; chorismate biosynthesis; chorismate from D-erythrose 4-phosphate and phosphoenolpyruvate: step 2/7. The protein operates within metabolic intermediate biosynthesis; chorismate biosynthesis; chorismate from D-erythrose 4-phosphate and phosphoenolpyruvate: step 3/7. It participates in metabolic intermediate biosynthesis; chorismate biosynthesis; chorismate from D-erythrose 4-phosphate and phosphoenolpyruvate: step 4/7. It functions in the pathway metabolic intermediate biosynthesis; chorismate biosynthesis; chorismate from D-erythrose 4-phosphate and phosphoenolpyruvate: step 5/7. Its pathway is metabolic intermediate biosynthesis; chorismate biosynthesis; chorismate from D-erythrose 4-phosphate and phosphoenolpyruvate: step 6/7. In terms of biological role, the AROM polypeptide catalyzes 5 consecutive enzymatic reactions in prechorismate polyaromatic amino acid biosynthesis. The polypeptide is Pentafunctional AROM polypeptide (Saccharomyces cerevisiae (strain ATCC 204508 / S288c) (Baker's yeast)).